Here is a 291-residue protein sequence, read N- to C-terminus: Phosphatidylglycerol--prolipoprotein diacylglyceryl transferase (291 aa).

The next 7 membrane-spanning stretches (helical) occupy residues 21–41, 60–80, 96–116, 124–144, 198–218, 225–245, and 258–278; these read IALH…MWLA, LLYA…VLFY, WDGG…MWWF, FLQV…MGRI, SQLY…NLYI, GSVS…VEFF, and ISMG…MMIW. R143 is a binding site for a 1,2-diacyl-sn-glycero-3-phospho-(1'-sn-glycerol).

It belongs to the Lgt family.

It is found in the cell inner membrane. The enzyme catalyses L-cysteinyl-[prolipoprotein] + a 1,2-diacyl-sn-glycero-3-phospho-(1'-sn-glycerol) = an S-1,2-diacyl-sn-glyceryl-L-cysteinyl-[prolipoprotein] + sn-glycerol 1-phosphate + H(+). It functions in the pathway protein modification; lipoprotein biosynthesis (diacylglyceryl transfer). Catalyzes the transfer of the diacylglyceryl group from phosphatidylglycerol to the sulfhydryl group of the N-terminal cysteine of a prolipoprotein, the first step in the formation of mature lipoproteins. The protein is Phosphatidylglycerol--prolipoprotein diacylglyceryl transferase of Photorhabdus laumondii subsp. laumondii (strain DSM 15139 / CIP 105565 / TT01) (Photorhabdus luminescens subsp. laumondii).